The sequence spans 164 residues: MKKQVVEVLVEGGKATPGPPLGPAIGPLGLNVKQVVDKINEATKEFAGMQVPVKIIVDPVTKQFEIEVGVPPTSQLIKKELGLEKGSGEPKHNIVGNLTMEQVIKIAKMKRSQMLALTLKAAAKEVIGTALSMGVTVEGKDPRIVQREIDEGVYDELFEKAEKE.

Belongs to the universal ribosomal protein uL11 family. In terms of assembly, part of the ribosomal stalk of the 50S ribosomal subunit. Interacts with L10 and the large rRNA to form the base of the stalk. L10 forms an elongated spine to which L12 dimers bind in a sequential fashion forming a multimeric L10(L12)X complex.

Functionally, forms part of the ribosomal stalk which helps the ribosome interact with GTP-bound translation factors. The protein is Large ribosomal subunit protein uL11 of Pyrococcus horikoshii (strain ATCC 700860 / DSM 12428 / JCM 9974 / NBRC 100139 / OT-3).